The primary structure comprises 345 residues: Uroporphyrinogen decarboxylase (345 aa).

Substrate is bound by residues 27-31 (RQAGR), Phe-46, Asp-76, Tyr-152, Ser-207, and His-321.

Belongs to the uroporphyrinogen decarboxylase family. As to quaternary structure, homodimer.

Its subcellular location is the cytoplasm. The catalysed reaction is uroporphyrinogen III + 4 H(+) = coproporphyrinogen III + 4 CO2. Its pathway is porphyrin-containing compound metabolism; protoporphyrin-IX biosynthesis; coproporphyrinogen-III from 5-aminolevulinate: step 4/4. Its function is as follows. Catalyzes the decarboxylation of four acetate groups of uroporphyrinogen-III to yield coproporphyrinogen-III. This chain is Uroporphyrinogen decarboxylase, found in Staphylococcus aureus (strain USA300 / TCH1516).